The primary structure comprises 90 residues: Small ribosomal subunit protein uS15c (90 aa).

This sequence belongs to the universal ribosomal protein uS15 family. Part of the 30S ribosomal subunit.

It localises to the plastid. The protein resides in the chloroplast. In Nandina domestica (Heavenly bamboo), this protein is Small ribosomal subunit protein uS15c (rps15).